The primary structure comprises 383 residues: Probable assembly chaperone of rpl4 (383 aa).

The span at 1-12 (MGKPRPHKKKAS) shows a compositional bias: basic residues. The segment at 1 to 33 (MGKPRPHKKKASKTREKSVLSAGGSISKRKMNE) is disordered. TPR repeat units follow at residues 35 to 68 (PRKL…ATSN), 73 to 106 (LSSL…DPTG), 116 to 147 (AEKF…LRGI), and 193 to 226 (PEVL…WKDL). The interval 345–383 (NKELGEEMEDDSNVEDGEGEGEEEWEGIESDSDHEMADS) is disordered. The segment covering 350–374 (EEMEDDSNVEDGEGEGEEEWEGIES) has biased composition (acidic residues).

The protein belongs to the ACL4 family.

It localises to the cytoplasm. It is found in the nucleus. Acts as a chaperone for the L4 ribosomal subunit, required for hierarchical ribosome assembly. Shields ribosomal protein L4 until timely release and insertion into the pre-ribosome is possible, once ribosomal protein L18 is present. This chain is Probable assembly chaperone of rpl4, found in Emericella nidulans (strain FGSC A4 / ATCC 38163 / CBS 112.46 / NRRL 194 / M139) (Aspergillus nidulans).